The following is a 719-amino-acid chain: Histone-lysine N-methyltransferase SETDB2 (719 aa).

The span at 72 to 82 (SQKEVNAQSSD) shows a compositional bias: polar residues. The segment at 72–102 (SQKEVNAQSSDPMPVTQKEQENKSNAFPSTS) is disordered. The region spanning 157 to 229 (LNLKGENPLQ…DNFSFNTYVQ (73 aa)) is the MBD domain. The Pre-SET domain occupies 291–364 (DSCDCSEGCI…LCQNRVVQHG (74 aa)). Zn(2+)-binding residues include Cys293, Cys295, Cys299, Cys305, Cys307, Cys345, Cys349, Cys351, and Cys356. The SET domain occupies 367–694 (VRLQVFKTEQ…ARTELTWDYG (328 aa)). Residues 377–379 (KGW) and Asp418 each bind S-adenosyl-L-methionine. Residues 508-547 (FVSSESVTPEDNDGFKPPREHLNSKTKGAQKDSSSNHVDE) form a disordered region. A compositionally biased stretch (basic and acidic residues) spans 520-530 (DGFKPPREHLN). Polar residues predominate over residues 532–543 (KTKGAQKDSSSN). Residues Arg648 and 651–652 (NH) contribute to the S-adenosyl-L-methionine site. Positions 654, 707, 709, and 714 each coordinate Zn(2+).

It belongs to the class V-like SAM-binding methyltransferase superfamily. As to expression, ubiquitous. Highest expression in heart, testis and ovary.

It localises to the nucleus. The protein resides in the chromosome. The catalysed reaction is N(6),N(6)-dimethyl-L-lysyl(9)-[histone H3] + S-adenosyl-L-methionine = N(6),N(6),N(6)-trimethyl-L-lysyl(9)-[histone H3] + S-adenosyl-L-homocysteine + H(+). Histone methyltransferase involved in left-right axis specification in early development and mitosis. Specifically trimethylates 'Lys-9' of histone H3 (H3K9me3). H3K9me3 is a specific tag for epigenetic transcriptional repression that recruits HP1 (CBX1, CBX3 and/or CBX5) proteins to methylated histones. Contributes to H3K9me3 in both the interspersed repetitive elements and centromere-associated repeats. Plays a role in chromosome condensation and segregation during mitosis. The protein is Histone-lysine N-methyltransferase SETDB2 (SETDB2) of Homo sapiens (Human).